Reading from the N-terminus, the 329-residue chain is D-alanine--D-alanine ligase (329 aa).

Residues 120 to 326 (KLWLSAIGIP…FAHYLEQILR (207 aa)) enclose the ATP-grasp domain. 150 to 205 (ALAKWGKVFIKAASQGSSVGCYSASNETDLLQGIKDAFGYSEQVLIEKAVKPRELE) provides a ligand contact to ATP. Aspartate 280, glutamate 293, and asparagine 295 together coordinate Mg(2+).

This sequence belongs to the D-alanine--D-alanine ligase family. Mg(2+) is required as a cofactor. It depends on Mn(2+) as a cofactor.

It is found in the cytoplasm. It catalyses the reaction 2 D-alanine + ATP = D-alanyl-D-alanine + ADP + phosphate + H(+). Its pathway is cell wall biogenesis; peptidoglycan biosynthesis. Functionally, cell wall formation. The protein is D-alanine--D-alanine ligase of Aeromonas salmonicida (strain A449).